Consider the following 531-residue polypeptide: MILPAPHVEYFLLAPMLIVFSVAVAGVLAEAFLPRRWRYGAQVTLALGGSAVALIAVIVVARSIHGSGHAAVLGAIAVDRATLFLQGTVLLVTIMAVVFMAERSARVSPQRQNTLAVARLPGLDSFTPQASAVPGSDAERQAERAGATQTELFPLAMLSVGGMMVFPASNDLLTMFVALEVLSLPLYLMCGLARNRRLLSQEAAMKYFLLGAFSSAFFLYGVALLYGATGTLTLPGIRDALAARTDDSMALAGVALLAVGLLFKVGAVPFHSWIPDVYQGAPTPITGFMAAATKVAAFGALLRVVYVALPPLHDQWRPVLWAIAILTMTVGTVTAVNQTNVKRMLAYSSVAHVGFILTGVIADNPAGLSATLFYLVAYSFSTMGAFAIVGLVRGADGSAGSEDADLSHWAGLGQRSPIVGVMLSMFLLAFAGIPLTSGFVSKFAVFRAAASAGAVPLVIVGVISSGVAAYFYVRVIVSMFFTEESGDTPHVAAPGVLSKAAIAVCTVVTVVLGIAPQPVLDLADQAAQLLR.

14 consecutive transmembrane segments (helical) span residues 8–28, 41–61, 81–101, 146–166, 172–192, 208–228, 250–270, 282–302, 318–338, 350–370, 372–392, 418–438, 453–473, and 500–520; these read VEYFLLAPMLIVFSVAVAGVL, AQVTLALGGSAVALIAVIVVA, ATLFLQGTVLLVTIMAVVFMA, GATQTELFPLAMLSVGGMMVF, LLTMFVALEVLSLPLYLMCGL, FLLGAFSSAFFLYGVALLYGA, ALAGVALLAVGLLFKVGAVPF, PTPITGFMAAATKVAAFGALL, PVLWAIAILTMTVGTVTAVNQ, VAHVGFILTGVIADNPAGLSA, LFYLVAYSFSTMGAFAIVGLV, IVGVMLSMFLLAFAGIPLTSG, GAVPLVIVGVISSGVAAYFYV, and AAIAVCTVVTVVLGIAPQPVL.

It belongs to the complex I subunit 2 family. As to quaternary structure, NDH-1 is composed of 14 different subunits. Subunits NuoA, H, J, K, L, M, N constitute the membrane sector of the complex.

It is found in the cell membrane. It catalyses the reaction a quinone + NADH + 5 H(+)(in) = a quinol + NAD(+) + 4 H(+)(out). Functionally, NDH-1 shuttles electrons from NADH, via FMN and iron-sulfur (Fe-S) centers, to quinones in the respiratory chain. The immediate electron acceptor for the enzyme in this species is believed to be a menaquinone. Couples the redox reaction to proton translocation (for every two electrons transferred, four hydrogen ions are translocated across the cytoplasmic membrane), and thus conserves the redox energy in a proton gradient. The sequence is that of NADH-quinone oxidoreductase subunit N from Mycobacterium bovis (strain ATCC BAA-935 / AF2122/97).